We begin with the raw amino-acid sequence, 512 residues long: Cobyric acid synthase (512 aa).

Residues 262–442 (WLRVAAIRLP…WHGLLETDRF (181 aa)) enclose the GATase cobBQ-type domain. Cys343 acts as the Nucleophile in catalysis. His434 is an active-site residue.

Belongs to the CobB/CobQ family. CobQ subfamily.

The protein operates within cofactor biosynthesis; adenosylcobalamin biosynthesis. Catalyzes amidations at positions B, D, E, and G on adenosylcobyrinic A,C-diamide. NH(2) groups are provided by glutamine, and one molecule of ATP is hydrogenolyzed for each amidation. The polypeptide is Cobyric acid synthase (Rhodococcus jostii (strain RHA1)).